Consider the following 379-residue polypeptide: Cytochrome b (379 aa).

The next 4 helical transmembrane spans lie at 33-53, 77-98, 113-133, and 178-198; these read FGSLLGACLTIQIITGLFLAM, WTIRYLHANGASLFFLCLFIHV, WNIGIMLLFSVMATAFMGYVL, and FFALHFILPFIISALTMIHLL. Histidine 83 and histidine 97 together coordinate heme b. 2 residues coordinate heme b: histidine 182 and histidine 196. Histidine 201 provides a ligand contact to a ubiquinone. 4 helical membrane passes run 226 to 246, 288 to 308, 320 to 340, and 347 to 367; these read TKDFLGLLLLILLLMTLTLFY, LGGVVALIMSILILAIMPFLQ, LSQFLFWILVADLLTLTWIGG, and FINIGQMASILYFSLMVFIMP.

This sequence belongs to the cytochrome b family. The cytochrome bc1 complex contains 11 subunits: 3 respiratory subunits (MT-CYB, CYC1 and UQCRFS1), 2 core proteins (UQCRC1 and UQCRC2) and 6 low-molecular weight proteins (UQCRH/QCR6, UQCRB/QCR7, UQCRQ/QCR8, UQCR10/QCR9, UQCR11/QCR10 and a cleavage product of UQCRFS1). This cytochrome bc1 complex then forms a dimer. Heme b is required as a cofactor.

It is found in the mitochondrion inner membrane. Its function is as follows. Component of the ubiquinol-cytochrome c reductase complex (complex III or cytochrome b-c1 complex) that is part of the mitochondrial respiratory chain. The b-c1 complex mediates electron transfer from ubiquinol to cytochrome c. Contributes to the generation of a proton gradient across the mitochondrial membrane that is then used for ATP synthesis. This chain is Cytochrome b (MT-CYB), found in Lepilemur aeeclis (Sportive lemur).